We begin with the raw amino-acid sequence, 119 residues long: Large ribosomal subunit protein bL20 (119 aa).

This sequence belongs to the bacterial ribosomal protein bL20 family.

Its function is as follows. Binds directly to 23S ribosomal RNA and is necessary for the in vitro assembly process of the 50S ribosomal subunit. It is not involved in the protein synthesizing functions of that subunit. The protein is Large ribosomal subunit protein bL20 of Burkholderia cenocepacia (strain HI2424).